The sequence spans 265 residues: Pro-opiomelanocortin (265 aa).

The signal sequence occupies residues 1-26 (MPRLCSSRSGALLLALLLQASMEVRG). Intrachain disulfides connect cysteine 28–cysteine 50 and cysteine 34–cysteine 46. Residue threonine 71 is glycosylated (O-linked (GalNAc...) threonine). The residue at position 87 (phenylalanine 87) is a Phenylalanine amide. The interval 89–138 (RRNGSSSSGVGGAAQKREEEVAVGEGPGPRGDDAETGPREDKRSYSMEHF) is disordered. Asparagine 91 is a glycosylation site (N-linked (GlcNAc...) asparagine). Positions 106-129 (EEEVAVGEGPGPRGDDAETGPRED) are excised as a propeptide. The span at 118–138 (RGDDAETGPREDKRSYSMEHF) shows a compositional bias: basic and acidic residues. Serine 132 is modified (N-acetylserine; in Corticotropin). Valine 144 is subject to Valine amide. The residue at position 162 (serine 162) is a Phosphoserine. A Pyrrolidone carboxylic acid (Glu); partial modification is found at glutamate 173. Tyrosine 200 carries the post-translational modification Sulfotyrosine. The segment at 209-240 (EAAEKKDSGPYKMEHFRWGSPPKDKRYGGFMT) is disordered. The segment covering 210-235 (AAEKKDSGPYKMEHFRWGSPPKDKRY) has biased composition (basic and acidic residues).

The protein belongs to the POMC family. In terms of processing, specific enzymatic cleavages at paired basic residues yield the different active peptides. ACTH and MSH are produced by the pituitary gland.

The protein localises to the secreted. In terms of biological role, stimulates the adrenal glands to release cortisol. Anorexigenic peptide. Increases the pigmentation of skin by increasing melanin production in melanocytes. Its function is as follows. Endogenous orexigenic opiate. Functionally, endogenous opiate. The polypeptide is Pro-opiomelanocortin (POMC) (Bos taurus (Bovine)).